Here is a 515-residue protein sequence, read N- to C-terminus: Protein disulfide-isomerase (515 aa).

Positions 1–25 are cleaved as a signal peptide; the sequence is MAISKVWISLLLALAVVLSAPAARA. A Thioredoxin 1 domain is found at 26 to 150; sequence EEAAAAEEAA…IVEYLKKQVG (125 aa). Active-site nucleophile residues include C68 and C71. C68 and C71 are joined by a disulfide. The N-linked (GlcNAc...) asparagine glycan is linked to N283. Residues 346–489 enclose the Thioredoxin 2 domain; the sequence is LKEQVEAGQI…IVDYIKKNKE (144 aa). Catalysis depends on nucleophile residues C412 and C415. An intrachain disulfide couples C412 to C415. Residues 494 to 509 show a composition bias toward low complexity; sequence AAAAATEKAAEPAATE. Residues 494–515 are disordered; it reads AAAAATEKAAEPAATEPLKDEL. The Prevents secretion from ER motif lies at 512–515; it reads KDEL.

The protein belongs to the protein disulfide isomerase family.

It is found in the endoplasmic reticulum lumen. The enzyme catalyses Catalyzes the rearrangement of -S-S- bonds in proteins.. In terms of biological role, participates in the folding of proteins containing disulfide bonds, may be involved in glycosylation, prolyl hydroxylation and triglyceride transfer. The protein is Protein disulfide-isomerase (PDI) of Triticum aestivum (Wheat).